Consider the following 407-residue polypeptide: Dephospho-CoA kinase (407 aa).

The DPCK domain occupies 3 to 201; sequence RIGLTGGIGA…ERIVPFAHNL (199 aa). 11–16 contacts ATP; sequence GAGKSA. The interval 196–407 is UPF0157; sequence PFAHNLSTRQ…DWADSTGWKP (212 aa).

It in the N-terminal section; belongs to the CoaE family. In the C-terminal section; belongs to the UPF0157 (GrpB) family.

It is found in the cytoplasm. The enzyme catalyses 3'-dephospho-CoA + ATP = ADP + CoA + H(+). The protein operates within cofactor biosynthesis; coenzyme A biosynthesis; CoA from (R)-pantothenate: step 5/5. Functionally, catalyzes the phosphorylation of the 3'-hydroxyl group of dephosphocoenzyme A to form coenzyme A. This is Dephospho-CoA kinase from Mycolicibacterium paratuberculosis (strain ATCC BAA-968 / K-10) (Mycobacterium paratuberculosis).